Here is a 170-residue protein sequence, read N- to C-terminus: Cytochrome P450 monooxygenase oryQ (170 aa).

Residue cysteine 85 participates in heme binding.

It belongs to the cytochrome P450 family. The cofactor is heme.

It functions in the pathway secondary metabolite biosynthesis. In terms of biological role, cytochrome P450 monooxygenase; part of the gene cluster that mediates the biosynthesis of oryzines, natural products with an unusual maleidride backbone. The two subunits of the fungal fatty acid synthase oryfasA and oryfasB probably form octenoic acid. This fatty acid is most likely activated by the acyl-CoA ligase oryP to give octenyl-CoA before the citrate synthase-like protein oryE catalyzes condensation with oxaloacetate to form tricarboxylic acid. The next steps of the pathways are conjectural, but a favorite possible route has been proposed, beginning with decarboxylation and concomitant dehydration by the decarboxylase oryM, followed by tautomerization, which may lead to the production of a diene intermediate. Reduction of this diene intermediate could give the known metabolite piliformic acid. On the pathway to oryzine B and oryzine A, however, hydroxylation of the diene by the alpha-ketoglutarate-dependent dioxygenase oryG and lactonisation by the lactonohydrolases oryH or oryL could give oryzine B directly. Finally, enoyl reduction by the dehydrogenase oryD would then convert oryzine B into oryzine A. This Aspergillus oryzae (strain ATCC 42149 / RIB 40) (Yellow koji mold) protein is Cytochrome P450 monooxygenase oryQ.